The sequence spans 393 residues: Probable pectinesterase 8 (393 aa).

The N-terminal stretch at 1-19 (MKIISLSISIGIAIIAVLA) is a signal peptide. 5 N-linked (GlcNAc...) asparagine glycosylation sites follow: asparagine 100, asparagine 113, asparagine 140, asparagine 156, and asparagine 163. Position 165 (threonine 165) interacts with substrate. Residue asparagine 182 is glycosylated (N-linked (GlcNAc...) asparagine). Glutamine 200 contacts substrate. Aspartate 223 acts as the Proton donor in catalysis. The Nucleophile role is filled by aspartate 244. Asparagine 295 carries an N-linked (GlcNAc...) asparagine glycan. Position 308 (arginine 308) interacts with substrate. Residues asparagine 350, asparagine 369, and asparagine 378 are each glycosylated (N-linked (GlcNAc...) asparagine).

It belongs to the pectinesterase family. Expressed in siliques.

The protein localises to the secreted. It localises to the cell wall. The enzyme catalyses [(1-&gt;4)-alpha-D-galacturonosyl methyl ester](n) + n H2O = [(1-&gt;4)-alpha-D-galacturonosyl](n) + n methanol + n H(+). The protein operates within glycan metabolism; pectin degradation; 2-dehydro-3-deoxy-D-gluconate from pectin: step 1/5. Its function is as follows. Acts in the modification of cell walls via demethylesterification of cell wall pectin. In Arabidopsis thaliana (Mouse-ear cress), this protein is Probable pectinesterase 8 (PME8).